A 428-amino-acid chain; its full sequence is Serine--tRNA ligase (428 aa).

L-serine is bound at residue 235 to 237 (TAE). 266–268 (RSE) lines the ATP pocket. Position 289 (Glu-289) interacts with L-serine. Residue 353–356 (EISS) coordinates ATP. Ser-389 contacts L-serine.

Belongs to the class-II aminoacyl-tRNA synthetase family. Type-1 seryl-tRNA synthetase subfamily. As to quaternary structure, homodimer. The tRNA molecule binds across the dimer.

Its subcellular location is the cytoplasm. It carries out the reaction tRNA(Ser) + L-serine + ATP = L-seryl-tRNA(Ser) + AMP + diphosphate + H(+). It catalyses the reaction tRNA(Sec) + L-serine + ATP = L-seryl-tRNA(Sec) + AMP + diphosphate + H(+). Its pathway is aminoacyl-tRNA biosynthesis; selenocysteinyl-tRNA(Sec) biosynthesis; L-seryl-tRNA(Sec) from L-serine and tRNA(Sec): step 1/1. Functionally, catalyzes the attachment of serine to tRNA(Ser). Is also able to aminoacylate tRNA(Sec) with serine, to form the misacylated tRNA L-seryl-tRNA(Sec), which will be further converted into selenocysteinyl-tRNA(Sec). The sequence is that of Serine--tRNA ligase from Psychromonas ingrahamii (strain DSM 17664 / CCUG 51855 / 37).